The following is a 341-amino-acid chain: Dimethylsulfoniopropionate lyase 7 (341 aa).

Composition is skewed to basic and acidic residues over residues 1–10 and 319–328; these read MAGKDRKTIE and ERKLAKDRQK. Disordered stretches follow at residues 1–24 and 319–341; these read MAGK…GGRF and ERKL…AFDA.

Belongs to the aspartate/glutamate racemases family. ALMA1 subfamily. In terms of assembly, homotetramer.

The catalysed reaction is S,S-dimethyl-beta-propiothetin = acrylate + dimethyl sulfide + H(+). Mediates cleavage of dimethylsulfoniopropionate (DMSP) into dimethyl sulfide (DMS) and acrylate. DMS is the principal form by which sulfur is transported from oceans to the atmosphere and is a key component of the ocean sulfur cycle. The sequence is that of Dimethylsulfoniopropionate lyase 7 from Emiliania huxleyi (strain CCMP1516).